Consider the following 156-residue polypeptide: MNMNATILGQAIAFVIFVWFCMKYVWPPLMAAIEKRQKEISDGLASAERAKKDLDLAQANATDQLKKAKAEAQVIIEQANKRRSQILDEAKAEAEQERTKIVAQAQAEIDAERKRAREELRKQVAILAVAGAEKIIERSVDEAANSDIVDKLVAEL.

The chain crosses the membrane as a helical span at residues 11–31 (AIAFVIFVWFCMKYVWPPLMA).

This sequence belongs to the ATPase B chain family. F-type ATPases have 2 components, F(1) - the catalytic core - and F(0) - the membrane proton channel. F(1) has five subunits: alpha(3), beta(3), gamma(1), delta(1), epsilon(1). F(0) has three main subunits: a(1), b(2) and c(10-14). The alpha and beta chains form an alternating ring which encloses part of the gamma chain. F(1) is attached to F(0) by a central stalk formed by the gamma and epsilon chains, while a peripheral stalk is formed by the delta and b chains.

It localises to the cell inner membrane. F(1)F(0) ATP synthase produces ATP from ADP in the presence of a proton or sodium gradient. F-type ATPases consist of two structural domains, F(1) containing the extramembraneous catalytic core and F(0) containing the membrane proton channel, linked together by a central stalk and a peripheral stalk. During catalysis, ATP synthesis in the catalytic domain of F(1) is coupled via a rotary mechanism of the central stalk subunits to proton translocation. Functionally, component of the F(0) channel, it forms part of the peripheral stalk, linking F(1) to F(0). In Klebsiella pneumoniae (strain 342), this protein is ATP synthase subunit b.